We begin with the raw amino-acid sequence, 104 residues long: DNA-directed RNA polymerase subunit omega (104 aa).

It belongs to the RNA polymerase subunit omega family. The RNAP catalytic core consists of 2 alpha, 1 beta, 1 beta' and 1 omega subunit. When a sigma factor is associated with the core the holoenzyme is formed, which can initiate transcription.

The enzyme catalyses RNA(n) + a ribonucleoside 5'-triphosphate = RNA(n+1) + diphosphate. In terms of biological role, promotes RNA polymerase assembly. Latches the N- and C-terminal regions of the beta' subunit thereby facilitating its interaction with the beta and alpha subunits. The protein is DNA-directed RNA polymerase subunit omega (rpoZ) of Streptococcus pyogenes serotype M1.